Here is a 558-residue protein sequence, read N- to C-terminus: Potassium-transporting ATPase potassium-binding subunit (558 aa).

A run of 12 helical transmembrane segments spans residues 1-21, 66-86, 127-147, 166-186, 245-265, 281-301, 327-347, 354-374, 377-397, 416-436, 482-502, and 531-551; these read MEII…SGYL, FNGF…WLFL, MIVM…VCIA, IVRF…ILLM, IWSN…MLFL, ALIL…LTMW, FGAG…TGSV, LTPI…VFGG, VGLM…SLMV, IVLV…LAFM, ISTG…QLMI, and IVFI…LGPI.

This sequence belongs to the KdpA family. The system is composed of three essential subunits: KdpA, KdpB and KdpC.

It is found in the cell membrane. Functionally, part of the high-affinity ATP-driven potassium transport (or Kdp) system, which catalyzes the hydrolysis of ATP coupled with the electrogenic transport of potassium into the cytoplasm. This subunit binds the extracellular potassium ions and delivers the ions to the membrane domain of KdpB through an intramembrane tunnel. This chain is Potassium-transporting ATPase potassium-binding subunit, found in Staphylococcus aureus (strain USA300).